The sequence spans 504 residues: Lysine--tRNA ligase (504 aa).

Positions 414 and 421 each coordinate Mg(2+).

Belongs to the class-II aminoacyl-tRNA synthetase family. As to quaternary structure, homodimer. Requires Mg(2+) as cofactor.

The protein resides in the cytoplasm. It carries out the reaction tRNA(Lys) + L-lysine + ATP = L-lysyl-tRNA(Lys) + AMP + diphosphate. In Photorhabdus laumondii subsp. laumondii (strain DSM 15139 / CIP 105565 / TT01) (Photorhabdus luminescens subsp. laumondii), this protein is Lysine--tRNA ligase.